The following is a 641-amino-acid chain: Phosphomethylpyrimidine synthase (641 aa).

Substrate contacts are provided by residues asparagine 221, methionine 250, tyrosine 279, histidine 315, 335 to 337 (SRG), 376 to 379 (DGLR), and glutamate 415. A Zn(2+)-binding site is contributed by histidine 419. Tyrosine 442 contributes to the substrate binding site. Histidine 483 is a Zn(2+) binding site. [4Fe-4S] cluster is bound by residues cysteine 563, cysteine 566, and cysteine 571.

This sequence belongs to the ThiC family. Homodimer. The cofactor is [4Fe-4S] cluster.

It carries out the reaction 5-amino-1-(5-phospho-beta-D-ribosyl)imidazole + S-adenosyl-L-methionine = 4-amino-2-methyl-5-(phosphooxymethyl)pyrimidine + CO + 5'-deoxyadenosine + formate + L-methionine + 3 H(+). Its pathway is cofactor biosynthesis; thiamine diphosphate biosynthesis. Catalyzes the synthesis of the hydroxymethylpyrimidine phosphate (HMP-P) moiety of thiamine from aminoimidazole ribotide (AIR) in a radical S-adenosyl-L-methionine (SAM)-dependent reaction. This Rhodopseudomonas palustris (strain TIE-1) protein is Phosphomethylpyrimidine synthase.